The chain runs to 321 residues: Hex-5-enoyl-[acyl-carrier protein] acetylenase (321 aa).

2 helical membrane-spanning segments follow: residues 36-56 and 62-82; these read FLLY…LLWW and VEIG…SVGL. The Histidine box-1 signature appears at 83 to 88; sequence HRYFAH. Residues 99 to 119 form a helical membrane-spanning segment; the sequence is VILAILGCMGAQGPVVSWVAV. A Histidine box-2 motif is present at residues 120-124; sequence HRRHH. The chain crosses the membrane as a helical span at residues 188-208; it reads YVVWIVLGLLIPTILGGIIHG. A Histidine box-3 motif is present at residues 269 to 273; sequence QNNHH.

It belongs to the fatty acid desaturase type 2 family. It depends on Fe(2+) as a cofactor.

It is found in the membrane. The catalysed reaction is 5-hexenoyl-[ACP] + 2 reduced [2Fe-2S]-[ferredoxin] + O2 + 2 H(+) = 5-hexynoyl-[ACP] + 2 oxidized [2Fe-2S]-[ferredoxin] + 2 H2O. It catalyses the reaction hexanoyl-[ACP] + 2 reduced [2Fe-2S]-[ferredoxin] + O2 + 2 H(+) = 5-hexenoyl-[ACP] + 2 oxidized [2Fe-2S]-[ferredoxin] + 2 H2O. Desaturase involved in the biosynthesis of jamaicamides, which show sodium channel blocking activity and fish toxicity. Catalyzes the conversion of 5-hexenoyl loaded onto the acyl carrier protein JamC (5-hexenoyl-JamC) to 5-hexynoyl-JamC. Can also catalyze the conversion of hexanoyl-JamC to 5-hexenoyl-JamC, but it cannot use free 5-hexenoic acid, 5-hexenoyl-CoA, 2-hexenoyl-JamC, 3-hexenoyl-JamC or 4-hexenoyl-JamC. Is specific for C(6) chains, and cannot use 4-pentenoyl-JamC, 6-heptenoyl-JamC or 7-octenoyl-JamC as substrate. In Moorena producens (strain JHB), this protein is Hex-5-enoyl-[acyl-carrier protein] acetylenase.